A 350-amino-acid chain; its full sequence is MSDTTQVGWQLSEHAPLRALNTFHVEATARWLLSVHTPEALPQALAAPEIADQPLLVLGSGSNVLLAGDPPGCVLCFENRDTAIIAHHADHAIVRAGAGVNWHALVLYSLQQGLSGLENLALIPGTVGACPIQNIGAYGAQVGDFIHVVEAFDRHHQQFVRLDAAACALGYRDSVFKQQPERYLIVAVEFNLPLLCELRLDYAGIREELASMGAELARAADVAQAVINIRQRKLPDPDVLGNAGSFFKNPLLPNEQIAALQASFADMPVYPGEHAGLGKLSAAWLIEQCGWKGRREGDAGVSPEHALVLVNYGTASGAQLLDFARRIAESVRERYSVILEPEPRIIGAHW.

The FAD-binding PCMH-type domain maps to 24-195 (HVEATARWLL…VAVEFNLPLL (172 aa)). Arginine 172 is a catalytic residue. Residue serine 245 is the Proton donor of the active site. Residue glutamate 342 is part of the active site.

The protein belongs to the MurB family. It depends on FAD as a cofactor.

It is found in the cytoplasm. The catalysed reaction is UDP-N-acetyl-alpha-D-muramate + NADP(+) = UDP-N-acetyl-3-O-(1-carboxyvinyl)-alpha-D-glucosamine + NADPH + H(+). The protein operates within cell wall biogenesis; peptidoglycan biosynthesis. In terms of biological role, cell wall formation. This is UDP-N-acetylenolpyruvoylglucosamine reductase from Xanthomonas oryzae pv. oryzae (strain PXO99A).